The chain runs to 65 residues: Ferredoxin-like protein in vnf region (65 aa).

4Fe-4S ferredoxin-type domains are found at residues 2–30 (AMAIDGYECTVCGDCEPVCPTGSIVFRDD) and 32–65 (YAIEADSCNECTDVGEPRCLGVCPVDLCIQPLDD). The [4Fe-4S] cluster site is built by Cys-10, Cys-13, Cys-16, Cys-20, Cys-39, Cys-42, Cys-50, and Cys-54.

Requires [4Fe-4S] cluster as cofactor.

The polypeptide is Ferredoxin-like protein in vnf region (Azotobacter vinelandii).